The following is a 291-amino-acid chain: Kidney mitochondrial carrier protein 1 (291 aa).

An N-acetylserine modification is found at Ser2. Solcar repeat units follow at residues 7–96, 104–189, and 198–289; these read KPFV…LKRL, ETLL…TKKH, and DTVA…LKKL. 6 helical membrane passes run 9–26, 71–89, 106–124, 164–183, 204–224, and 264–283; these read FVYGGLASITAECGTFPI, GIAPAMLRQASYGTIKIGT, LLVNVVCGILSGVISSAIA, GVSLTAQRAAIVVGVELPVY, FLSSFTCGLVGALASNPVDVV, and GFWPNWLRLGPWNIIFFLTY.

The protein belongs to the mitochondrial carrier (TC 2.A.29) family. Interacts with VDAC1. Present in kidney (at protein level). Expressed predominantly within the kidney cortex in the proximal and distal tubules and at lower levels in the testis and white adipose tissue.

It is found in the mitochondrion inner membrane. The catalysed reaction is sulfite(in) + sulfate(out) = sulfite(out) + sulfate(in). It carries out the reaction thiosulfate(in) + sulfate(out) = thiosulfate(out) + sulfate(in). It catalyses the reaction sulfate(out) + phosphate(in) = sulfate(in) + phosphate(out). The enzyme catalyses oxalate(in) + sulfate(out) = oxalate(out) + sulfate(in). The catalysed reaction is malonate(in) + sulfate(out) = malonate(out) + sulfate(in). It carries out the reaction maleate(in) + sulfate(out) = maleate(out) + sulfate(in). It catalyses the reaction (S)-malate(in) + sulfate(out) = (S)-malate(out) + sulfate(in). The enzyme catalyses (3S)-citramalate(in) + sulfate(out) = (3S)-citramalate(out) + sulfate(in). The catalysed reaction is (3R)-citramalate(in) + sulfate(out) = (3R)-citramalate(out) + sulfate(in). It carries out the reaction sulfate(out) + succinate(in) = sulfate(in) + succinate(out). It catalyses the reaction (S,S)-tartrate(in) + sulfate(out) = (S,S)-tartrate(out) + sulfate(in). The enzyme catalyses (2R,3R)-tartrate(in) + sulfate(out) = (2R,3R)-tartrate(out) + sulfate(in). The catalysed reaction is D-aspartate(in) + sulfate(out) = D-aspartate(out) + sulfate(in). It carries out the reaction L-aspartate(in) + sulfate(out) = L-aspartate(out) + sulfate(in). It catalyses the reaction sulfate(in) = sulfate(out). The enzyme catalyses phosphate(in) = phosphate(out). The catalysed reaction is (S)-malate(out) = (S)-malate(in). In terms of biological role, antiporter that transports inorganic anions (sulfate, sulfite, thiosulfate and phosphate) and, to a lesser extent, a variety of dicarboxylates (e.g. malonate, malate and citramalate) and, even more so, aspartate. The sulfate/sulfate exchange is much higher than the phosphate/phosphate and malate/malate exchanges. The transport affinities is higher for sulfate and thiosulfate than for any other substrate. May catalyze the export of sulfite and thiosulfate (the hydrogen sulfide degradation products) from the mitochondria, thereby modulating the level of the hydrogen sulfide. Also may mediate a very low unidirectional transport of sulfate, phosphate and (S)-malate. The polypeptide is Kidney mitochondrial carrier protein 1 (Mus musculus (Mouse)).